The chain runs to 774 residues: Armadillo-like helical domain-containing protein 4 (774 aa).

An N-terminal signal peptide occupies residues 1-27 (MRGPIVLHICLAFCSLLLFSVATQCLA). Residues 28–714 (FPKIERRREI…KDKAGYMSGM (687 aa)) lie on the Extracellular side of the membrane. Over residues 41-52 (HAEKGQSDKMNT) the composition is skewed to basic and acidic residues. 2 disordered regions span residues 41-63 (HAEKGQSDKMNTDDLENSSVTSK) and 97-135 (QPGQAGLMQTERPGVSTPTESGVPSAEEVFGSSQPERIS). Asn57 is a glycosylation site (N-linked (GlcNAc...) asparagine). The N-linked (GlcNAc...) asparagine glycan is linked to Asn189. The segment covering 221 to 233 (KTEKFEADTDHRT) has biased composition (basic and acidic residues). Disordered regions lie at residues 221–275 (KTEK…QPLE) and 600–669 (ASYG…PGLE). The span at 258-275 (SQMTADNTQAAATKQPLE) shows a compositional bias: polar residues. Acidic residues predominate over residues 607–651 (LESEEGQEDEDEEDEEDEDEEEEDEEEDEEDKDADSLDEGLDGDT). A helical transmembrane segment spans residues 715 to 735 (LVPVGVGIAGALFILGALYSI). The Cytoplasmic portion of the chain corresponds to 736–774 (KVMNRRRRNGFKRHKRKQREFNSMQDRVMLLADSSEDEF). Phosphoserine is present on residues Ser769 and Ser770.

As to quaternary structure, interacts with IL6ST; this interaction prevents IL6ST protein homodimerization and bridges ARMH4 with IL6R and STAT3 and therefore inhibits phosphorylation of STAT3 at 'Tyr-705'. Interacts (via cytoplasmic tail) with RICTOR; this interaction bridges ARMH4 to the mTORC2 complex and inhibits the mTORC2 kinase activity. Expressed in podocytes.

Its subcellular location is the membrane. In terms of biological role, may modulate immune response and may play a role in inflammation. Down-modulates STAT3 signaling throught direct interaction with IL6ST, resulting in the inhibition of phosphorylation of STAT3 at 'Tyr-705'. May negatively regulates AKT signaling by modulating the activity of mTORC2 complex through RICTOR interaction. The protein is Armadillo-like helical domain-containing protein 4 of Homo sapiens (Human).